The sequence spans 271 residues: Cell division protein FtsQ (271 aa).

Positions 1–37 are disordered; that stretch reads MAAGPTTAEKSGASGAKRSSKGSSDGPSRPGTRNRKF. Residues 1-43 are Cytoplasmic-facing; that stretch reads MAAGPTTAEKSGASGAKRSSKGSSDGPSRPGTRNRKFRMPGTR. The span at 8 to 24 shows a compositional bias: low complexity; sequence AEKSGASGAKRSSKGSS. A helical membrane pass occupies residues 44–64; it reads ALLITLGVLLLVAGGLWALYG. The Extracellular segment spans residues 65-271; the sequence is STWFRVERVK…APTAPASSGS (207 aa). The POTRA domain occupies 68-137; sequence FRVERVKTSG…HGIGLKVTER (70 aa).

This sequence belongs to the FtsQ/DivIB family. FtsQ subfamily.

It localises to the cell membrane. Essential cell division protein. This is Cell division protein FtsQ from Streptomyces venezuelae (strain ATCC 10712 / CBS 650.69 / DSM 40230 / JCM 4526 / NBRC 13096 / PD 04745).